The following is a 266-amino-acid chain: Apolipoprotein A-I (266 aa).

The first 18 residues, 1 to 18, serve as a signal peptide directing secretion; the sequence is MKAVVLTLAVLFLTGSQA. A run of 2 repeats spans residues 67-88 and 89-110. The 10 X approximate tandem repeats stretch occupies residues 67 to 266; the sequence is LKLLDNWDSL…DEAAKKLNAQ (200 aa). At M109 the chain carries Methionine sulfoxide. A 3; half-length repeat occupies 111–121; it reads KDLEEVKQKVQ. Repeat copies occupy residues 122 to 142, 144 to 165, 166 to 187, 188 to 210, and 211 to 231. Residues 232–242 form a 9; half-length repeat; it reads PALEDLRQGLL. Repeat 10 spans residues 243–266; it reads PVLESFKVSLLAAVDEAAKKLNAQ.

Belongs to the apolipoprotein A1/A4/E family. Homodimer. Interacts with APOA1BP and CLU. Component of a sperm activating protein complex (SPAP), consisting of APOA1, an immunoglobulin heavy chain, an immunoglobulin light chain and albumin. Interacts with NDRG1. Interacts with SCGB3A2. Interacts with NAXE and YJEFN3. Post-translationally, glycosylated. Palmitoylated. In terms of processing, phosphorylation sites are present in the extracellular medium. Major protein of plasma HDL, also found in chylomicrons.

The protein localises to the secreted. Participates in the reverse transport of cholesterol from tissues to the liver for excretion by promoting cholesterol efflux from tissues and by acting as a cofactor for the lecithin cholesterol acyltransferase (LCAT). As part of the SPAP complex, activates spermatozoa motility. The protein is Apolipoprotein A-I (APOA1) of Ailuropoda melanoleuca (Giant panda).